Consider the following 146-residue polypeptide: Mitochondrial import receptor subunit TOM20 homolog B (146 aa).

The Mitochondrial intermembrane segment spans residues methionine 1 to serine 5. The chain crosses the membrane as a helical span at residues serine 6–phenylalanine 25. The Cytoplasmic portion of the chain corresponds to aspartate 26 to glutamate 146. Over residues asparagine 37–lysine 47 the composition is skewed to basic residues. The disordered stretch occupies residues asparagine 37 to serine 56. Phosphoserine is present on serine 141.

Belongs to the Tom20 family. As to quaternary structure, forms part of the preprotein translocase complex of the outer mitochondrial membrane (TOM complex). Interacts with tom22.

The protein localises to the mitochondrion outer membrane. Central component of the receptor complex responsible for the recognition and translocation of cytosolically synthesized mitochondrial preproteins. Together with tom22 functions as the transit peptide receptor at the surface of the mitochondrion outer membrane and facilitates the movement of preproteins into the tom40 translocation pore. In Danio rerio (Zebrafish), this protein is Mitochondrial import receptor subunit TOM20 homolog B (tomm20b).